We begin with the raw amino-acid sequence, 211 residues long: Protein-methionine-sulfoxide reductase heme-binding subunit MsrQ (211 aa).

4 consecutive transmembrane segments (helical) span residues Leu17–Ala37, Leu82–Val102, Pro116–Thr136, and Phe153–Ser173.

It belongs to the MsrQ family. In terms of assembly, heterodimer of a catalytic subunit (MsrP) and a heme-binding subunit (MsrQ). Requires FMN as cofactor. Heme b is required as a cofactor.

The protein resides in the cell inner membrane. In terms of biological role, part of the MsrPQ system that repairs oxidized periplasmic proteins containing methionine sulfoxide residues (Met-O), using respiratory chain electrons. Thus protects these proteins from oxidative-stress damage caused by reactive species of oxygen and chlorine generated by the host defense mechanisms. MsrPQ is essential for the maintenance of envelope integrity under bleach stress, rescuing a wide series of structurally unrelated periplasmic proteins from methionine oxidation, including the primary periplasmic chaperone SurA and the lipoprotein Pal. MsrQ provides electrons for reduction to the reductase catalytic subunit MsrP, using the quinone pool of the respiratory chain. The polypeptide is Protein-methionine-sulfoxide reductase heme-binding subunit MsrQ (Shigella sonnei (strain Ss046)).